A 157-amino-acid chain; its full sequence is Peptide methionine sulfoxide reductase MsrA (157 aa).

C10 is a catalytic residue.

It belongs to the MsrA Met sulfoxide reductase family.

It catalyses the reaction L-methionyl-[protein] + [thioredoxin]-disulfide + H2O = L-methionyl-(S)-S-oxide-[protein] + [thioredoxin]-dithiol. It carries out the reaction [thioredoxin]-disulfide + L-methionine + H2O = L-methionine (S)-S-oxide + [thioredoxin]-dithiol. Has an important function as a repair enzyme for proteins that have been inactivated by oxidation. Catalyzes the reversible oxidation-reduction of methionine sulfoxide in proteins to methionine. The protein is Peptide methionine sulfoxide reductase MsrA of Clostridium perfringens (strain SM101 / Type A).